The primary structure comprises 482 residues: Nucleoside triphosphate pyrophosphatase/Nudix hydrolase fusion protein (482 aa).

The interval 1–299 is maf-like; the sequence is MSIPLILASK…DLWNVGRGEL (299 aa). The active-site Proton acceptor is aspartate 167. A Nudix hydrolase domain is found at 338–475; sequence GTNGASGILL…TDWPRFAARL (138 aa).

The protein in the N-terminal section; belongs to the Maf family. A divalent metal cation serves as cofactor.

The protein localises to the cytoplasm. It catalyses the reaction a ribonucleoside 5'-triphosphate + H2O = a ribonucleoside 5'-phosphate + diphosphate + H(+). It carries out the reaction a 2'-deoxyribonucleoside 5'-triphosphate + H2O = a 2'-deoxyribonucleoside 5'-phosphate + diphosphate + H(+). Its function is as follows. Nucleoside triphosphate pyrophosphatase. May have a dual role in cell division arrest and in preventing the incorporation of modified nucleotides into cellular nucleic acids. This Bifidobacterium longum (strain NCC 2705) protein is Nucleoside triphosphate pyrophosphatase/Nudix hydrolase fusion protein.